Consider the following 209-residue polypeptide: MGQKVHPRGFRLGVSADWQTRWFNEKNYATWLKEDEEIRKVVKNAYSQAGISEVFIERPDNESVTITIKTARPGVIIGKKGAEIGKLREDLEKELNRRVIVNVEEIKTPETDAQLVAENIAGRIEKRASYKRAMKRALSDALRKGATGVKVMVSGRLAGAEIARREWYLRGRLPLQTVRAVVDYGTATAKTKYGTIGIKVWIYKGDAEV.

Residues 38-107 (IRKVVKNAYS…RVIVNVEEIK (70 aa)) enclose the KH type-2 domain.

Belongs to the universal ribosomal protein uS3 family. In terms of assembly, part of the 30S ribosomal subunit. Forms a tight complex with proteins S10 and S14.

In terms of biological role, binds the lower part of the 30S subunit head. Binds mRNA in the 70S ribosome, positioning it for translation. This chain is Small ribosomal subunit protein uS3, found in Pseudothermotoga lettingae (strain ATCC BAA-301 / DSM 14385 / NBRC 107922 / TMO) (Thermotoga lettingae).